The following is a 130-amino-acid chain: Albumin-1 C (130 aa).

Residues 1–26 form the signal peptide; it reads MASVKLASLIVLFATLGMFLTKNVGA. Cystine bridges form between Cys29–Cys46, Cys33–Cys48, and Cys41–Cys58. 2 propeptides span residues 64–69 and 123–130; these read VFLRTN and LLKSVSTA.

In terms of processing, the C-terminal glycine may be removed from PA1b. As to expression, major component of both the cotyledons and embryonic axes of mature seeds.

PA1b binds to basic 7S globulin (BG) and stimulates its phosphorylation activity. Involved in the signal transduction system to regulate the growth and differentiation as a hormone peptide. Toxic to various insects through binding to a high affinity binding site in the insect gut. The chain is Albumin-1 C from Pisum sativum (Garden pea).